Reading from the N-terminus, the 336-residue chain is Dihydroorotate dehydrogenase (quinone) (336 aa).

FMN contacts are provided by residues 62–66 (AGLDK) and Thr86. Residue Lys66 coordinates substrate. 111-115 (NRMGF) is a binding site for substrate. FMN contacts are provided by Asn139 and Asn172. Residue Asn172 coordinates substrate. The Nucleophile role is filled by Ser175. Asn177 is a binding site for substrate. Residues Lys217 and Thr245 each contribute to the FMN site. Residue 246 to 247 (NT) coordinates substrate. Residues Gly268, Gly297, and 318-319 (YS) contribute to the FMN site.

Belongs to the dihydroorotate dehydrogenase family. Type 2 subfamily. Monomer. FMN serves as cofactor.

It localises to the cell membrane. It catalyses the reaction (S)-dihydroorotate + a quinone = orotate + a quinol. It participates in pyrimidine metabolism; UMP biosynthesis via de novo pathway; orotate from (S)-dihydroorotate (quinone route): step 1/1. Catalyzes the conversion of dihydroorotate to orotate with quinone as electron acceptor. This Yersinia pseudotuberculosis serotype O:1b (strain IP 31758) protein is Dihydroorotate dehydrogenase (quinone).